We begin with the raw amino-acid sequence, 736 residues long: Segment polarity protein dishevelled homolog DVL-2 (736 aa).

Residues 11-93 (VGETKVIYHL…RVVSWLVSSD (83 aa)) form the DIX domain. Positions 93–255 (DTPQPEVAPP…RMERTSSFSS (163 aa)) are disordered. A compositionally biased stretch (pro residues) spans 111–122 (VPPPPPLPPLPP). Positions 159–171 (LRRDRPRRRDSSE) are enriched in basic and acidic residues. Residues 193–208 (ESSSTLMTSELESTSL) show a composition bias toward low complexity. Residue Ser211 is modified to Phosphoserine. Residues 218-230 (SRFSSSTEQSSAS) are compositionally biased toward polar residues. Over residues 232–244 (LLKRHRRRRKQRP) the composition is skewed to basic residues. The 73-residue stretch at 267–339 (TVTLNMEKYN…NDDAVRVLRD (73 aa)) folds into the PDZ domain. One can recognise a DEP domain in the interval 433-507 (PESGLEVRDR…SEQCYYVFGD (75 aa)). Residues 558–568 (PHPYSPQPPPY) show a composition bias toward pro residues. A disordered region spans residues 558–665 (PHPYSPQPPP…PNLRALPGLH (108 aa)). Low complexity-rich tracts occupy residues 581–598 (ASSQ…TRSD) and 614–629 (SKSG…SRGG).

This sequence belongs to the DSH family. In terms of assembly, interacts through its PDZ domain with the C-terminal regions of VANGL1 and VANGL2. Interacts with Rac. Interacts with ARRB1; the interaction is enhanced by phosphorylation of DVL1. Can form large oligomers (via DIX domain). Interacts (via DIX domain) with DIXDC1 (via DIX domain). Interacts (via DEP domain) with AP2M1 and the AP-2 complex. Interacts with FAM105B/otulin. Interacts with DCDC2. Interacts (when phosphorylated) with FOXK1 and FOXK2; the interaction induces DVL2 nuclear translocation. Interacts with MAPK15. Interacts with PKD1 (via extracellular domain). Interacts with LMBR1L. In terms of processing, phosphorylated by CSNK1D. WNT3A induces DVL2 phosphorylation by CSNK1E and MARK kinases. Post-translationally, ubiquitinated via 'Lys-63'-linked polyubiquitin chains; leading to its autophagy-mediated degradation. In terms of tissue distribution, ubiquitous.

It is found in the cell membrane. The protein resides in the cytoplasm. Its subcellular location is the cytosol. It localises to the cytoplasmic vesicle. The protein localises to the nucleus. In terms of biological role, plays a role in the signal transduction pathways mediated by multiple Wnt genes. Participates both in canonical and non-canonical Wnt signaling by binding to the cytoplasmic C-terminus of frizzled family members and transducing the Wnt signal to down-stream effectors. Promotes internalization and degradation of frizzled proteins upon Wnt signaling. The protein is Segment polarity protein dishevelled homolog DVL-2 (Dvl2) of Mus musculus (Mouse).